The sequence spans 258 residues: MILVLDVGNTNIVLGIYKNKELIANWRLATDNKRTADEYGIQVIELFSHNNLSFSDIEGVIISSVVPNIMYSLEHMISKYFNIKPIIVGPGVKTGINIKYDNPKEVGADRIVNAVAAHEIYKKPLIIIDFGTATTFCAVTKEANYLGGTICPGIKISSDALFDKAAKLPRVELVKTPGVICKNTVASIQSGIIYGYAGQVDYIVSKMKKEMIDLGEEEPFVVATGGFAKLISEESKSIDEINAILTLEGLRVIYEKNK.

6-13 (DVGNTNIV) lines the ATP pocket. Residues Tyr100 and 107-110 (GADR) each bind substrate. The active-site Proton acceptor is the Asp109. Residue Asp129 participates in K(+) binding. Thr132 contacts ATP. Thr184 contributes to the substrate binding site.

This sequence belongs to the type III pantothenate kinase family. As to quaternary structure, homodimer. The cofactor is NH4(+). K(+) is required as a cofactor.

The protein localises to the cytoplasm. It carries out the reaction (R)-pantothenate + ATP = (R)-4'-phosphopantothenate + ADP + H(+). It functions in the pathway cofactor biosynthesis; coenzyme A biosynthesis; CoA from (R)-pantothenate: step 1/5. In terms of biological role, catalyzes the phosphorylation of pantothenate (Pan), the first step in CoA biosynthesis. This is Type III pantothenate kinase from Clostridium botulinum (strain Loch Maree / Type A3).